The primary structure comprises 126 residues: Large ribosomal subunit protein bL17 (126 aa).

It belongs to the bacterial ribosomal protein bL17 family. Part of the 50S ribosomal subunit. Contacts protein L32.

This chain is Large ribosomal subunit protein bL17, found in Coxiella burnetii (strain CbuG_Q212) (Coxiella burnetii (strain Q212)).